A 2813-amino-acid chain; its full sequence is von Willebrand factor (2813 aa).

An N-terminal signal peptide occupies residues 1–22; it reads MSPTRLVRVLLALALILPGKLC. A propeptide spanning residues 23-763 is cleaved from the precursor; sequence TKGTVGRSSM…SSPRSHRSKR (741 aa). The region spanning 33-201 is the VWFD 1 domain; that stretch reads ARCSLFGGDF…ALSSGEQRCK (169 aa). 2 disulfide bridges follow: cysteine 35/cysteine 162 and cysteine 57/cysteine 200. N-linked (GlcNAc...) asparagine glycans are attached at residues asparagine 99, asparagine 156, and asparagine 211. A TIL 1 domain is found at 295-348; the sequence is CPAGMEYKECVSPCTRTCQSLHVKEVCQEQCVDGCSCPEGQLLDEGHCVGSAEC. The VWFD 2 domain maps to 386 to 560; the sequence is GECLVTGQSH…NAWKLLGACE (175 aa). 3 disulfide bridges follow: cysteine 388/cysteine 524, cysteine 410/cysteine 559, and cysteine 432/cysteine 440. The Cell attachment site signature appears at 531 to 533; sequence RGD. TIL domains are found at residues 652 to 707 and 776 to 827; these read CPQG…KAQC and CPAD…LERC. N-linked (GlcNAc...) asparagine glycosylation occurs at asparagine 666. Positions 698–700 match the Cell attachment site motif; the sequence is RGD. The segment at 764-787 is amino-terminal; that stretch reads SLSCRPPMVKLVCPADNPRAEGLE. 3 disulfides stabilise this stretch: cysteine 767–cysteine 808, cysteine 776–cysteine 804, and cysteine 810–cysteine 821. The interval 788-833 is E1; it reads CAKTCQNYDLQCMSTGCVSGCLCPQGMVRHENRCVALERCPCFHQG. Residues 826-853 form a CX region; it reads RCPCFHQGQEYAPGETVKIDCNTCVCRD. Asparagine 857 carries an N-linked (GlcNAc...) asparagine glycan. The region spanning 865–1032 is the VWFD 3 domain; it reads ATCSAIGMAH…NSWKVNPQCA (168 aa). Disulfide bonds link cysteine 867–cysteine 996, cysteine 889–cysteine 1031, cysteine 898–cysteine 993, cysteine 914–cysteine 921, cysteine 1060–cysteine 1084, cysteine 1071–cysteine 1111, cysteine 1089–cysteine 1091, cysteine 1126–cysteine 1130, cysteine 1149–cysteine 1169, cysteine 1153–cysteine 1165, and cysteine 1196–cysteine 1199. The 51-residue stretch at 1146-1196 folds into the TIL 4 domain; it reads YNSCAPACPITCQHPEPLACPVQCVEGCHAHCPPGKILDELLQTCIDPEDC. N-linked (GlcNAc...) asparagine glycosylation is present at asparagine 1231. Disulfide bonds link cysteine 1234–cysteine 1237 and cysteine 1272–cysteine 1458. 2 consecutive VWFA domains span residues 1277-1453 and 1498-1665; these read DLVF…RDEI and DVVF…PDLV. N-linked (GlcNAc...) asparagine glycosylation is found at asparagine 1515 and asparagine 1574. Cystine bridges form between cysteine 1669/cysteine 1670, cysteine 1686/cysteine 1872, cysteine 1879/cysteine 1904, cysteine 1899/cysteine 1940, cysteine 1927/cysteine 2088, cysteine 1950/cysteine 2085, cysteine 1972/cysteine 2123, and cysteine 1993/cysteine 2001. The 181-residue stretch at 1691 to 1871 folds into the VWFA 3 domain; it reads DVVLLLDGSS…TLGNSFFHKL (181 aa). In terms of domain architecture, VWFD 4 spans 1948-2124; the sequence is CVCMGSSTRH…TVQQLGKTCQ (177 aa). The segment at 2216–2261 is E2; the sequence is CPRLCEGNTSSCGDQPSEGCFCPPNQVMLEGSCVPEEACTQCISED. 4 N-linked (GlcNAc...) asparagine glycosylation sites follow: asparagine 2223, asparagine 2290, asparagine 2357, and asparagine 2400. Positions 2255 to 2328 constitute a VWFC 1 domain; it reads TQCISEDGVR…CCPEYECVCD (74 aa). Residues 2429 to 2495 form the VWFC 2 domain; the sequence is KVCVHRGTIY…HEGECCGRCL (67 aa). Positions 2507–2509 match the Cell attachment site motif; the sequence is RGD. Residues asparagine 2546 and asparagine 2585 are each glycosylated (N-linked (GlcNAc...) asparagine). One can recognise a VWFC 3 domain in the interval 2580-2645; the sequence is EACLLNGTII…NQGECCGRCL (66 aa). 4 disulfide bridges follow: cysteine 2724-cysteine 2774, cysteine 2739-cysteine 2788, cysteine 2750-cysteine 2804, and cysteine 2754-cysteine 2806. Residues 2724–2812 enclose the CTCK domain; the sequence is CKDIIAKLQR…QCRCSPRKCS (89 aa). Asparagine 2790 is a glycosylation site (N-linked (GlcNAc...) asparagine).

As to quaternary structure, multimeric. Interacts with F8. Post-translationally, all cysteine residues are involved in intrachain or interchain disulfide bonds. In terms of processing, N- and O-glycosylated. As to expression, plasma.

The protein localises to the secreted. It is found in the extracellular space. The protein resides in the extracellular matrix. Functionally, important in the maintenance of hemostasis, it promotes adhesion of platelets to the sites of vascular injury by forming a molecular bridge between sub-endothelial collagen matrix and platelet-surface receptor complex, glycoprotein Ibalpha/IX/V. Also acts as a chaperone for coagulation factor VIII, delivering it to the site of injury, stabilizing its heterodimeric structure and protecting it from premature clearance from plasma. This chain is von Willebrand factor (VWF), found in Canis lupus familiaris (Dog).